The following is a 487-amino-acid chain: Zinc finger protein 345 (487 aa).

15 consecutive C2H2-type zinc fingers follow at residues 62-84, 90-112, 118-140, 146-168, 174-196, 202-224, 230-252, 258-280, 286-308, 314-336, 342-364, 370-392, 398-420, 426-448, and 454-476; these read LECK…QRIH, YECK…QRIH, YECN…QRIH, YECK…QIIH, YECK…HRIH, YECK…RRVH, YICN…QRIH, YVCK…QRIH, YECK…QRMH, YECK…QLIH, YECR…QRIH, and YECK…KKNH.

Belongs to the krueppel C2H2-type zinc-finger protein family.

The protein resides in the nucleus. In terms of biological role, may be involved in transcriptional regulation. The chain is Zinc finger protein 345 (ZNF345) from Bos taurus (Bovine).